The sequence spans 198 residues: Nucleoid occlusion factor SlmA (198 aa).

An HTH tetR-type domain is found at 11–71 (PNRKHQILES…GLIDFIEESI (61 aa)). Residues 34-53 (TTAKLAAEVGFSEAALYRHF) constitute a DNA-binding region (H-T-H motif).

This sequence belongs to the nucleoid occlusion factor SlmA family. As to quaternary structure, homodimer. Interacts with FtsZ.

It localises to the cytoplasm. The protein resides in the nucleoid. Required for nucleoid occlusion (NO) phenomenon, which prevents Z-ring formation and cell division over the nucleoid. Acts as a DNA-associated cell division inhibitor that binds simultaneously chromosomal DNA and FtsZ, and disrupts the assembly of FtsZ polymers. SlmA-DNA-binding sequences (SBS) are dispersed on non-Ter regions of the chromosome, preventing FtsZ polymerization at these regions. This Colwellia psychrerythraea (strain 34H / ATCC BAA-681) (Vibrio psychroerythus) protein is Nucleoid occlusion factor SlmA.